The sequence spans 1848 residues: Chitin synthase E (1848 aa).

Residues 1–17 (MAAPSPAGGAPSHAQSS) are compositionally biased toward low complexity. Residues 1-22 (MAAPSPAGGAPSHAQSSLPSLP) are disordered. Residues 1-779 (MAAPSPAGGA…CWADLAKVGE (779 aa)) enclose the Myosin motor domain. 102–109 (GESGSGKT) contributes to the ATP binding site. A disordered region spans residues 593 to 621 (SSKPLRMPSMARRKTSPSSRLAFDAGDAD). An actin-binding region spans residues 659–683 (LDIVNKCLSSTNLNPYFIFCLKPND). 2 helical membrane-spanning segments follow: residues 889–909 (WIALVYLLTFYIPDFAIKLFG) and 928–948 (LIIWFSCGVAIFFIVAFPGLV). The Cytochrome b5 heme-binding domain occupies 952–1040 (QHVYSAAELS…LLDYRPTNIS (89 aa)). Asparagine 1038 and asparagine 1063 each carry an N-linked (GlcNAc...) asparagine glycan. A helical membrane pass occupies residues 1200-1220 (FILAISVLICSIIVFKFLAAL). Asparagine 1423, asparagine 1457, and asparagine 1563 each carry an N-linked (GlcNAc...) asparagine glycan. Transmembrane regions (helical) follow at residues 1595-1615 (LSTVIQPVTLAYIIYLIYWLV), 1621-1641 (IPYTSLILLAAIYGLQALIFI), and 1648-1668 (MVGWMIVYLLALPVFSLALPL). An N-linked (GlcNAc...) asparagine glycan is attached at asparagine 1786. The region spanning 1790–1845 (LPSDDAILAEIREILRTADLMSVTKKSIKLELERRFGVNLDLKRPYINSATEAVLA) is the DEK-C domain.

In the N-terminal section; belongs to the TRAFAC class myosin-kinesin ATPase superfamily. Myosin family. The protein in the C-terminal section; belongs to the chitin synthase family. Class V subfamily.

The protein localises to the cell membrane. Its subcellular location is the cell septum. It localises to the cell tip. It catalyses the reaction [(1-&gt;4)-N-acetyl-beta-D-glucosaminyl](n) + UDP-N-acetyl-alpha-D-glucosamine = [(1-&gt;4)-N-acetyl-beta-D-glucosaminyl](n+1) + UDP + H(+). Polymerizes chitin, a structural polymer of the cell wall and septum, by transferring the sugar moiety of UDP-GlcNAc to the non-reducing end of the growing chitin polymer. Important for hyphal growth and conidiophore development but not pathogenicity. This Aspergillus fumigatus (strain ATCC MYA-4609 / CBS 101355 / FGSC A1100 / Af293) (Neosartorya fumigata) protein is Chitin synthase E.